Reading from the N-terminus, the 193-residue chain is 3-isopropylmalate dehydratase small subunit (193 aa).

This sequence belongs to the LeuD family. LeuD type 1 subfamily. As to quaternary structure, heterodimer of LeuC and LeuD.

It carries out the reaction (2R,3S)-3-isopropylmalate = (2S)-2-isopropylmalate. The protein operates within amino-acid biosynthesis; L-leucine biosynthesis; L-leucine from 3-methyl-2-oxobutanoate: step 2/4. Its function is as follows. Catalyzes the isomerization between 2-isopropylmalate and 3-isopropylmalate, via the formation of 2-isopropylmaleate. The polypeptide is 3-isopropylmalate dehydratase small subunit (Bacillus thuringiensis subsp. konkukian (strain 97-27)).